The following is a 314-amino-acid chain: Deoxymugineic acid synthase 1-B (314 aa).

The interval 1–22 is disordered; it reads MGAGDKTAAGMPRIGMGTAVQG. Position 44 (Asp-44) interacts with NADP(+). Tyr-49 (proton donor) is an active-site residue. Residue His-112 coordinates substrate. Residues 158–159, Gln-180, 258–266, and 273–281 each bind NADP(+); these read AN, FDEARMREN, and ELTEEERRR.

Belongs to the aldo/keto reductase family. In terms of tissue distribution, mostly expressed in root tissues, observed in mesocotyl and embryonic roots, seedling roots, crown and seedling leafes, mature bracts, anthers, pistil, caryopsis and embryos.

The enzyme catalyses 2'-deoxymugineate + NAD(+) = 3''-deamino-3''-oxonicotianamine + NADH + H(+). The catalysed reaction is 2'-deoxymugineate + NADP(+) = 3''-deamino-3''-oxonicotianamine + NADPH + H(+). It functions in the pathway siderophore biosynthesis. Its function is as follows. Catalyzes the reduction of a 3''-keto intermediate during the biosynthesis of 2'-deoxymugineic acid (DMA) from L-Met. Involved in the formation of phytosiderophores (MAs) belonging to the mugineic acid family and required to acquire iron. The sequence is that of Deoxymugineic acid synthase 1-B from Triticum aestivum (Wheat).